The following is a 306-amino-acid chain: UDP-N-acetylenolpyruvoylglucosamine reductase (306 aa).

Positions 34-198 (VGGPADLLIT…LEVTFKLHNS (165 aa)) constitute an FAD-binding PCMH-type domain. Arg-177 is a catalytic residue. The Proton donor role is filled by Ser-227. Glu-297 is a catalytic residue.

The protein belongs to the MurB family. It depends on FAD as a cofactor.

It localises to the cytoplasm. The enzyme catalyses UDP-N-acetyl-alpha-D-muramate + NADP(+) = UDP-N-acetyl-3-O-(1-carboxyvinyl)-alpha-D-glucosamine + NADPH + H(+). It participates in cell wall biogenesis; peptidoglycan biosynthesis. Its function is as follows. Cell wall formation. The polypeptide is UDP-N-acetylenolpyruvoylglucosamine reductase (Clostridium botulinum (strain 657 / Type Ba4)).